Reading from the N-terminus, the 320-residue chain is ATP-dependent 6-phosphofructokinase (320 aa).

Glycine 12 lines the ATP pocket. Residues 22 to 26 (RGVVR) and 55 to 60 (RYSVSD) contribute to the ADP site. ATP is bound by residues 73 to 74 (RF) and 103 to 106 (GDGS). A Mg(2+)-binding site is contributed by aspartate 104. A substrate-binding site is contributed by 126-128 (TID). The active-site Proton acceptor is aspartate 128. Arginine 155 serves as a coordination point for ADP. Residues arginine 163 and 170–172 (MGR) contribute to the substrate site. ADP contacts are provided by residues 186-188 (GCE), lysine 212, and 214-216 (KKH). Residues glutamate 223, arginine 244, and 250-253 (HIQR) contribute to the substrate site.

Belongs to the phosphofructokinase type A (PFKA) family. ATP-dependent PFK group I subfamily. Prokaryotic clade 'B1' sub-subfamily. In terms of assembly, homotetramer. Requires Mg(2+) as cofactor.

The protein resides in the cytoplasm. The catalysed reaction is beta-D-fructose 6-phosphate + ATP = beta-D-fructose 1,6-bisphosphate + ADP + H(+). Its pathway is carbohydrate degradation; glycolysis; D-glyceraldehyde 3-phosphate and glycerone phosphate from D-glucose: step 3/4. Its activity is regulated as follows. Allosterically activated by ADP and other diphosphonucleosides, and allosterically inhibited by phosphoenolpyruvate. Catalyzes the phosphorylation of D-fructose 6-phosphate to fructose 1,6-bisphosphate by ATP, the first committing step of glycolysis. The protein is ATP-dependent 6-phosphofructokinase of Escherichia fergusonii (strain ATCC 35469 / DSM 13698 / CCUG 18766 / IAM 14443 / JCM 21226 / LMG 7866 / NBRC 102419 / NCTC 12128 / CDC 0568-73).